Reading from the N-terminus, the 728-residue chain is Probable LRR receptor-like serine/threonine-protein kinase At1g14390 (728 aa).

An N-terminal signal peptide occupies residues 1–27; the sequence is MHSSSKSQAFSLTFLLFLFLLPSVSES. Residues 28-356 are Extracellular-facing; that stretch reads QLISSESRTL…EEDTGIELGL (329 aa). N-linked (GlcNAc...) asparagine glycans are attached at residues Asn-55 and Asn-85. 9 LRR repeats span residues 74–96, 106–130, 131–155, 157–178, 179–202, 204–224, 225–248, 249–272, and 274–295; these read NGHV…RFSS, LSNL…IIRL, SSSL…ISSL, NLRS…LRGL, SNLQ…LASN, ITIS…IKKL, NKLQ…LLSL, PSLQ…SLCN, and KLRI…CFSS. N-linked (GlcNAc...) asparagine glycosylation is found at Asn-138 and Asn-169. A glycan (N-linked (GlcNAc...) asparagine) is linked at Asn-210. N-linked (GlcNAc...) asparagine glycans are attached at residues Asn-253 and Asn-267. The chain crosses the membrane as a helical span at residues 357-377; it reads VIGIIIGVILVSAVLAGLVLV. The Cytoplasmic segment spans residues 378 to 728; that stretch reads RMRKSRSKEE…ENLGLGGSEL (351 aa). In terms of domain architecture, Protein kinase spans 421–709; that stretch reads TMRSAVIGLS…DVVWNLQYTI (289 aa).

Belongs to the protein kinase superfamily. Ser/Thr protein kinase family.

Its subcellular location is the membrane. It carries out the reaction L-seryl-[protein] + ATP = O-phospho-L-seryl-[protein] + ADP + H(+). The catalysed reaction is L-threonyl-[protein] + ATP = O-phospho-L-threonyl-[protein] + ADP + H(+). The sequence is that of Probable LRR receptor-like serine/threonine-protein kinase At1g14390 from Arabidopsis thaliana (Mouse-ear cress).